The following is a 134-amino-acid chain: MSNTRTVHSSTSISKMNSALQISCLLVVLGCLLGSGHCQSEAEFAAKSREIAQVFGNPSVDKYTKARNLPTLIAFYEKYSSRLRLTPQERISINNAMRQYKAQRNQQVDGVSAQGGWLSDIIKTAISIIVKAVE.

The N-terminal stretch at 1-38 is a signal peptide; that stretch reads MSNTRTVHSSTSISKMNSALQISCLLVVLGCLLGSGHC.

The protein belongs to the Turandot family.

Its subcellular location is the secreted. Functionally, a humoral factor that may play a role in stress tolerance. This is Protein Turandot E from Drosophila melanogaster (Fruit fly).